Here is a 66-residue protein sequence, read N- to C-terminus: Conotoxin Bu1.4 (66 aa).

The first 23 residues, 1–23 (MGMRMRMMFTVFLLVVLANTVVS), serve as a signal peptide directing secretion. The propeptide occupies 24–46 (FPSDRDSDGADAEASDEPVEFER). Positions 25–48 (PSDRDSDGADAEASDEPVEFERDE) are disordered. Residues 32-42 (GADAEASDEPV) are compositionally biased toward acidic residues. Intrachain disulfides connect cysteine 51–cysteine 57 and cysteine 52–cysteine 62. Threonine 63 carries the threonine amide modification.

The protein belongs to the conotoxin A superfamily. As to expression, expressed by the venom duct.

It localises to the secreted. This is Conotoxin Bu1.4 from Conus bullatus (Bubble cone).